Here is a 353-residue protein sequence, read N- to C-terminus: Nicotinate-nucleotide--dimethylbenzimidazole phosphoribosyltransferase (353 aa).

Glu-320 (proton acceptor) is an active-site residue.

It belongs to the CobT family.

The enzyme catalyses 5,6-dimethylbenzimidazole + nicotinate beta-D-ribonucleotide = alpha-ribazole 5'-phosphate + nicotinate + H(+). The protein operates within nucleoside biosynthesis; alpha-ribazole biosynthesis; alpha-ribazole from 5,6-dimethylbenzimidazole: step 1/2. In terms of biological role, catalyzes the synthesis of alpha-ribazole-5'-phosphate from nicotinate mononucleotide (NAMN) and 5,6-dimethylbenzimidazole (DMB). The chain is Nicotinate-nucleotide--dimethylbenzimidazole phosphoribosyltransferase from Syntrophotalea carbinolica (strain DSM 2380 / NBRC 103641 / GraBd1) (Pelobacter carbinolicus).